A 237-amino-acid chain; its full sequence is MAQSVTGIQIGGMSFPPSVKPPGSGNTFFLGGAGVRGMEIQGNFVKFTAIGVYLEDKAVPALAVKWKGKTAEELTESVEFFREIVTGPFEKFTQVTMILPLTGQQYSEKVSENCVAIWKKFGIYTDAEAKAIEKFIEVFKDQTFPPGASILFTQSPDGSLTIGFSKDGCIPEVGNAVIENKLLSESVLESIIGKPGVSPEARKSVATRLSELLKESDHCVAGNGKVDECTKEAEVKA.

Residues threonine 48, asparagine 113, and serine 190 each contribute to the substrate site.

Belongs to the chalcone isomerase family.

The catalysed reaction is a chalcone = a flavanone.. It participates in secondary metabolite biosynthesis; flavonoid biosynthesis. In terms of biological role, catalyzes the intramolecular cyclization of bicyclic chalcones into tricyclic (S)-flavanones. Responsible for the isomerization of 4,2',4',6'-tetrahydroxychalcone (also termed chalcone) into naringenin. The polypeptide is Chalcone--flavanone isomerase 1 (CHI1) (Fragaria ananassa (Strawberry)).